The sequence spans 148 residues: uncharacterized protein (148 aa).

[4Fe-4S] cluster is bound by residues Cys21, Cys24, Cys88, and Cys117.

The protein belongs to the complex I 20 kDa subunit family. It depends on [4Fe-4S] cluster as a cofactor.

This is an uncharacterized protein from Methanocaldococcus jannaschii (strain ATCC 43067 / DSM 2661 / JAL-1 / JCM 10045 / NBRC 100440) (Methanococcus jannaschii).